A 154-amino-acid polypeptide reads, in one-letter code: Spermatogenesis-associated protein 19, mitochondrial (154 aa).

Residues 1-24 (MIITTWIMYIFARKTVGLPFPPRV) constitute a mitochondrion transit peptide. S26 and S116 each carry phosphoserine.

In terms of tissue distribution, expressed specifically in adult testis (at protein level).

The protein localises to the mitochondrion outer membrane. It is found in the mitochondrion. It localises to the cell projection. The protein resides in the cilium. Its subcellular location is the flagellum. Its function is as follows. Essential for sperm motility and male fertility. Plays an important role in sperm motility by regulating the organization and function of the mitochondria and is also required for correct sperm midpiece assembly. The chain is Spermatogenesis-associated protein 19, mitochondrial (Spata19) from Mus musculus (Mouse).